A 367-amino-acid polypeptide reads, in one-letter code: Alpha-2-HS-glycoprotein (367 aa).

A signal peptide spans 1–18; sequence MKSLVLLLCLAQLWGCHS. Residues 27–133 enclose the Cystatin fetuin-A-type 1 domain; the sequence is YRQPNCDDPE…KFSVVYAKCD (107 aa). 6 disulfides stabilise this stretch: Cys32–Cys358, Cys89–Cys100, Cys114–Cys132, Cys146–Cys149, Cys208–Cys219, and Cys230–Cys247. The residue at position 134 (Ser134) is a Phosphoserine. Residues Ser135 and Ser138 each carry the phosphoserine; by FAM20C modification. The region spanning 144-255 is the Cystatin fetuin-A-type 2 domain; that stretch reads KVCQDCPLLA…TCMVFQTQPV (112 aa). 2 N-linked (GlcNAc...) (complex) asparagine glycosylation sites follow: Asn156 and Asn176. The disordered stretch occupies residues 255–298; that stretch reads VSSQPQPEGANEAVPTPVVDPDAPPSPPLGAPGLPPAGSPPDSH. A glycan (O-linked (GalNAc...) threonine) is linked at Thr270. Pro residues predominate over residues 276 to 293; the sequence is DAPPSPPLGAPGLPPAGS. O-linked (GalNAc...) serine glycosylation is found at Ser280 and Ser293. Residues 301–340 constitute a propeptide, connecting peptide; sequence LAAPPGHQLHRAHYDLRHTFMGVVSLGSPSGEVSHPRKTR. Position 319 is a phosphothreonine; by FAM20C (Thr319). Residues Ser325, Ser328, and Ser330 each carry the phosphoserine; by FAM20C modification. 2 O-linked (GalNAc...) threonine glycosylation sites follow: Thr339 and Thr341. The O-linked (GalNAc...) serine glycan is linked to Ser346.

It belongs to the fetuin family. Alpha-2-HS glycoprotein derives from this precursor, when the connecting peptide is cleaved off. The two chains A and B are held together by a single disulfide bond. Phosphorylated by FAM20C in the extracellular medium. Post-translationally, O- and N-glycosylated. O-glycosylated with core 1 or possibly core 8 glycans. N-glycan at Asn-156: Hex5HexNAc4; N-glycan heterogeneity at Asn-176: Hex5HexNAc4 (major) and Hex6HexNAc5 (minor). In terms of tissue distribution, synthesized in liver and selectively concentrated in bone matrix. Secreted in plasma. It is also found in dentin in much higher quantities than other plasma proteins.

The protein localises to the secreted. Functionally, promotes endocytosis, possesses opsonic properties and influences the mineral phase of bone. Shows affinity for calcium and barium ions. This is Alpha-2-HS-glycoprotein (AHSG) from Homo sapiens (Human).